A 156-amino-acid chain; its full sequence is Transcription elongation factor GreA (156 aa).

The stretch at 2 to 78 (AKEIILTQEG…MISKAKLIED (77 aa)) forms a coiled coil.

This sequence belongs to the GreA/GreB family.

Necessary for efficient RNA polymerase transcription elongation past template-encoded arresting sites. The arresting sites in DNA have the property of trapping a certain fraction of elongating RNA polymerases that pass through, resulting in locked ternary complexes. Cleavage of the nascent transcript by cleavage factors such as GreA or GreB allows the resumption of elongation from the new 3'terminus. GreA releases sequences of 2 to 3 nucleotides. This Mesoplasma florum (strain ATCC 33453 / NBRC 100688 / NCTC 11704 / L1) (Acholeplasma florum) protein is Transcription elongation factor GreA.